Here is a 388-residue protein sequence, read N- to C-terminus: S-adenosylmethionine synthase (388 aa).

Residue histidine 16 participates in ATP binding. Aspartate 18 is a Mg(2+) binding site. Glutamate 44 lines the K(+) pocket. Glutamate 57 and glutamine 100 together coordinate L-methionine. A flexible loop region spans residues glutamine 100–glutamate 110. ATP is bound by residues aspartate 167–lysine 169, arginine 233–phenylalanine 234, aspartate 242, arginine 248–lysine 249, alanine 265, and lysine 269. Aspartate 242 provides a ligand contact to L-methionine. An L-methionine-binding site is contributed by lysine 273.

This sequence belongs to the AdoMet synthase family. In terms of assembly, homotetramer; dimer of dimers. Requires Mg(2+) as cofactor. K(+) serves as cofactor.

Its subcellular location is the cytoplasm. It catalyses the reaction L-methionine + ATP + H2O = S-adenosyl-L-methionine + phosphate + diphosphate. It participates in amino-acid biosynthesis; S-adenosyl-L-methionine biosynthesis; S-adenosyl-L-methionine from L-methionine: step 1/1. In terms of biological role, catalyzes the formation of S-adenosylmethionine (AdoMet) from methionine and ATP. The overall synthetic reaction is composed of two sequential steps, AdoMet formation and the subsequent tripolyphosphate hydrolysis which occurs prior to release of AdoMet from the enzyme. The protein is S-adenosylmethionine synthase of Aromatoleum aromaticum (strain DSM 19018 / LMG 30748 / EbN1) (Azoarcus sp. (strain EbN1)).